A 297-amino-acid chain; its full sequence is HTH-type transcriptional regulator ArgP (297 aa).

In terms of domain architecture, HTH lysR-type spans 4–60 (PDYRTLQALDAVIRERGFERAAQKLCITQSAVSQRIKQLENMFGQPLLVRTVPPRPT). A DNA-binding region (H-T-H motif) is located at residues 21-40 (FERAAQKLCITQSAVSQRIK).

This sequence belongs to the LysR transcriptional regulatory family. Homodimer.

Functionally, controls the transcription of genes involved in arginine and lysine metabolism. The chain is HTH-type transcriptional regulator ArgP from Salmonella dublin (strain CT_02021853).